Reading from the N-terminus, the 479-residue chain is MSSPGIDGDPKPPCLPRNGLVKLPGQPNGLGAASITKGTPAAKNRPCQPPPPPTLPPPSLATPLSRVALAGGPCPPASGPASGPVSGPPVERPPLATDEKILNGLFWYFSACEKCILAQVCKAWRRVLYQPKFWAGLTPVLHAKELYNVLPGGEKEFVNLQGFAARGFEGFCLVGVSDLDICEFIDNYSLSKKGVKAMSLKRSTITDAGLEVMLEQMQGVVRLELSGCNDFTEAGLWSSLSARITSLSVSDCINVADDAIAAISQLLPNLAELSLQAYHVTDTALAYFTARQGHSTHTLRLLSCWEITNHGVVNVVHSLPNLTSLSLSGCSKVTDDGVELVAENLRKLRSLDLSWCPRITDMALEYVACDLHRLEELVLDRCVRITDTGLSYLSTMSSLRSLYLRWCCQVQDFGLKHLLAMRNLRLLSLAGCPLLTTTGLSGLVQLQELEELELTNCPGATPELFKYFSQHLPRCLVIE.

A disordered region spans residues Met-1 to Arg-92. Residues Cys-47–Leu-60 show a composition bias toward pro residues. Residue Arg-92 is modified to Omega-N-methylarginine. The F-box domain occupies Pro-94–Pro-139. LRR repeat units follow at residues Asn-321–Ala-342, Lys-347–Cys-369, Arg-373–Ser-394, Ser-398–Leu-419, Asn-423–Val-444, and Leu-446–Gln-470.

Interacts with SKP1 and CUL1.

In terms of biological role, substrate-recognition component of the SCF (SKP1-CUL1-F-box protein)-type E3 ubiquitin ligase complex. The polypeptide is F-box/LRR-repeat protein 16 (Fbxl16) (Mus musculus (Mouse)).